We begin with the raw amino-acid sequence, 111 residues long: Small ribosomal subunit protein bS16 (111 aa).

Residues 92-111 (EKGVKESNEIVEPEGEEVKE) are disordered. Acidic residues predominate over residues 100–111 (EIVEPEGEEVKE).

The protein belongs to the bacterial ribosomal protein bS16 family.

In Petrotoga mobilis (strain DSM 10674 / SJ95), this protein is Small ribosomal subunit protein bS16.